Here is a 486-residue protein sequence, read N- to C-terminus: Glutamyl-tRNA(Gln) amidotransferase subunit A (486 aa).

Residues lysine 74 and serine 149 each act as charge relay system in the active site. The Acyl-ester intermediate role is filled by serine 173.

The protein belongs to the amidase family. GatA subfamily. As to quaternary structure, heterotrimer of A, B and C subunits.

The enzyme catalyses L-glutamyl-tRNA(Gln) + L-glutamine + ATP + H2O = L-glutaminyl-tRNA(Gln) + L-glutamate + ADP + phosphate + H(+). Allows the formation of correctly charged Gln-tRNA(Gln) through the transamidation of misacylated Glu-tRNA(Gln) in organisms which lack glutaminyl-tRNA synthetase. The reaction takes place in the presence of glutamine and ATP through an activated gamma-phospho-Glu-tRNA(Gln). This is Glutamyl-tRNA(Gln) amidotransferase subunit A from Prochlorococcus marinus (strain SARG / CCMP1375 / SS120).